The primary structure comprises 353 residues: Putative protein SPATA31J1 (353 aa).

The chain crosses the membrane as a helical span at residues 34–54 (IPQIIHFVLFVVFSLVILIIL). Residues 122–271 (EGSSHHLPRQ…NPGWVSWSDS (150 aa)) are disordered. Residues 182–195 (SVESLGSPSSLSSS) are compositionally biased toward low complexity. Residues 211–221 (PPASTLSPNPT) are compositionally biased toward polar residues. The span at 222–237 (SSTESLGYLSSLSSSQ) shows a compositional bias: low complexity. Basic residues predominate over residues 244–262 (PLKHPSHKPRGRSLPRRRN).

Belongs to the SPATA31 family.

It localises to the membrane. The sequence is that of Putative protein SPATA31J1 from Homo sapiens (Human).